Consider the following 29-residue polypeptide: Protein Tat (29 aa).

The tract at residues Pro1 to Asp29 is disordered. The short motif at Arg6–Asp8 is the Cell attachment site element. Over residues Glu13–Asp29 the composition is skewed to basic and acidic residues.

Belongs to the lentiviruses Tat family. Interacts with host CCNT1. Associates with the P-TEFb complex composed at least of Tat, P-TEFb (CDK9 and CCNT1), TAR RNA, RNA Pol II. Recruits the HATs CREBBP, TAF1/TFIID, EP300, PCAF and GCN5L2. Interacts with host KAT5/Tip60; this interaction targets the latter to degradation. Interacts with the host deacetylase SIRT1. Interacts with host capping enzyme RNGTT; this interaction stimulates RNGTT. Binds to host KDR, and to the host integrins ITGAV/ITGB3 and ITGA5/ITGB1. Interacts with host KPNB1/importin beta-1 without previous binding to KPNA1/importin alpha-1. Interacts with EIF2AK2. Interacts with host nucleosome assembly protein NAP1L1; this interaction may be required for the transport of Tat within the nucleus, since the two proteins interact at the nuclear rim. Interacts with host C1QBP/SF2P32; this interaction involves lysine-acetylated Tat. Interacts with the host chemokine receptors CCR2, CCR3 and CXCR4. Interacts with host DPP4/CD26; this interaction may trigger an anti-proliferative effect. Interacts with host LDLR. Interacts with the host extracellular matrix metalloproteinase MMP1. Interacts with host PRMT6; this interaction mediates Tat's methylation. Interacts with, and is ubiquitinated by MDM2/Hdm2. Interacts with host PSMC3 and HTATIP2. Interacts with STAB1; this interaction may overcome SATB1-mediated repression of IL2 and IL2RA (interleukin) in T cells by binding to the same domain than HDAC1. Interacts (when acetylated) with human CDK13, thereby increasing HIV-1 mRNA splicing and promoting the production of the doubly spliced HIV-1 protein Nef. Acetylation by EP300, CREBBP, GCN5L2/GCN5 and PCAF regulates the transactivation activity of Tat. In terms of processing, phosphorylated by EIF2AK2 on serine and threonine residues adjacent to the basic region important for TAR RNA binding and function. Phosphorylation of Tat by EIF2AK2 is dependent on the prior activation of EIF2AK2 by dsRNA. Post-translationally, asymmetrical arginine methylation by host PRMT6 seems to diminish the transactivation capacity of Tat and affects the interaction with host CCNT1. Polyubiquitination by MDM2 does not target Tat to degradation, but activates its transactivation function and fosters interaction with CCNT1 and TAR RNA.

The protein resides in the host nucleus. The protein localises to the host nucleolus. It localises to the host cytoplasm. Its subcellular location is the secreted. Its function is as follows. Transcriptional activator that increases RNA Pol II processivity, thereby increasing the level of full-length viral transcripts. Recognizes a hairpin structure at the 5'-LTR of the nascent viral mRNAs referred to as the transactivation responsive RNA element (TAR) and recruits the cyclin T1-CDK9 complex (P-TEFb complex) that will in turn hyperphosphorylate the RNA polymerase II to allow efficient elongation. The CDK9 component of P-TEFb and other Tat-activated kinases hyperphosphorylate the C-terminus of RNA Pol II that becomes stabilized and much more processive. Other factors such as HTATSF1/Tat-SF1, SUPT5H/SPT5, and HTATIP2 are also important for Tat's function. Besides its effect on RNA Pol II processivity, Tat induces chromatin remodeling of proviral genes by recruiting the histone acetyltransferases (HATs) CREBBP, EP300 and PCAF to the chromatin. This also contributes to the increase in proviral transcription rate, especially when the provirus integrates in transcriptionally silent region of the host genome. To ensure maximal activation of the LTR, Tat mediates nuclear translocation of NF-kappa-B by interacting with host RELA. Through its interaction with host TBP, Tat may also modulate transcription initiation. Tat can reactivate a latently infected cell by penetrating in it and transactivating its LTR promoter. In the cytoplasm, Tat is thought to act as a translational activator of HIV-1 mRNAs. In terms of biological role, extracellular circulating Tat can be endocytosed by surrounding uninfected cells via the binding to several surface receptors such as CD26, CXCR4, heparan sulfate proteoglycans (HSPG) or LDLR. Neurons are rarely infected, but they internalize Tat via their LDLR. Endosomal low pH allows Tat to cross the endosome membrane to enter the cytosol and eventually further translocate into the nucleus, thereby inducing severe cell dysfunctions ranging from cell activation to cell death. Through its interaction with nuclear HATs, Tat is potentially able to control the acetylation-dependent cellular gene expression. Tat seems to inhibit the HAT activity of KAT5/Tip60 and TAF1, and consequently modify the expression of specific cellular genes. Modulates the expression of many cellular genes involved in cell survival, proliferation or in coding for cytokines (such as IL10) or cytokine receptors. May be involved in the derepression of host interleukin IL2 expression. Mediates the activation of cyclin-dependent kinases and dysregulation of microtubule network. Tat plays a role in T-cell and neurons apoptosis. Tat induced neurotoxicity and apoptosis probably contribute to neuroAIDS. Host extracellular matrix metalloproteinase MMP1 cleaves Tat and decreases Tat's mediated neurotoxicity. Circulating Tat also acts as a chemokine-like and/or growth factor-like molecule that binds to specific receptors on the surface of the cells, affecting many cellular pathways. In the vascular system, Tat binds to ITGAV/ITGB3 and ITGA5/ITGB1 integrins dimers at the surface of endothelial cells and competes with bFGF for heparin-binding sites, leading to an excess of soluble bFGF. Binds to KDR/VEGFR-2. All these Tat-mediated effects enhance angiogenesis in Kaposi's sarcoma lesions. The protein is Protein Tat of Homo sapiens (Human).